The primary structure comprises 423 residues: Maltoporin 1 (423 aa).

Positions 1-24 are cleaved as a signal peptide; the sequence is MITLRKLPIALAVAAGVLSTQAMA.

Belongs to the porin LamB (TC 1.B.3) family. In terms of assembly, homotrimer formed of three 18-stranded antiparallel beta-barrels, containing three independent channels.

The protein resides in the cell outer membrane. The enzyme catalyses beta-maltose(in) = beta-maltose(out). In terms of biological role, involved in the transport of maltose and maltodextrins. The sequence is that of Maltoporin 1 from Yersinia pestis bv. Antiqua (strain Antiqua).